Consider the following 353-residue polypeptide: Photosystem II protein D1 (353 aa).

Residue Thr2 is modified to N-acetylthreonine. A Phosphothreonine modification is found at Thr2. A run of 3 helical transmembrane segments spans residues 29–46 (YIGW…TATS), 118–133 (HFLL…EWEL), and 142–156 (WIAV…AATA). His118 contributes to the chlorophyll a binding site. Tyr126 provides a ligand contact to pheophytin a. [CaMn4O5] cluster-binding residues include Asp170 and Glu189. Residues 197–218 (FHMLGVAGVFGGSLFSAMHGSL) traverse the membrane as a helical segment. Residue His198 participates in chlorophyll a binding. A quinone-binding positions include His215 and 264 to 265 (SF). Residue His215 coordinates Fe cation. His272 contributes to the Fe cation binding site. The chain crosses the membrane as a helical span at residues 274-288 (FLAAWPVVGIWFTAL). Residues His332, Glu333, Asp342, and Ala344 each coordinate [CaMn4O5] cluster. Residues 345-353 (AIDAPSING) constitute a propeptide that is removed on maturation.

This sequence belongs to the reaction center PufL/M/PsbA/D family. In terms of assembly, PSII is composed of 1 copy each of membrane proteins PsbA, PsbB, PsbC, PsbD, PsbE, PsbF, PsbH, PsbI, PsbJ, PsbK, PsbL, PsbM, PsbT, PsbX, PsbY, PsbZ, Psb30/Ycf12, at least 3 peripheral proteins of the oxygen-evolving complex and a large number of cofactors. It forms dimeric complexes. The D1/D2 heterodimer binds P680, chlorophylls that are the primary electron donor of PSII, and subsequent electron acceptors. It shares a non-heme iron and each subunit binds pheophytin, quinone, additional chlorophylls, carotenoids and lipids. D1 provides most of the ligands for the Mn4-Ca-O5 cluster of the oxygen-evolving complex (OEC). There is also a Cl(-1) ion associated with D1 and D2, which is required for oxygen evolution. The PSII complex binds additional chlorophylls, carotenoids and specific lipids. is required as a cofactor. Post-translationally, tyr-161 forms a radical intermediate that is referred to as redox-active TyrZ, YZ or Y-Z. In terms of processing, C-terminally processed by CTPA; processing is essential to allow assembly of the oxygen-evolving complex and thus photosynthetic growth.

Its subcellular location is the plastid. It is found in the chloroplast thylakoid membrane. The enzyme catalyses 2 a plastoquinone + 4 hnu + 2 H2O = 2 a plastoquinol + O2. Photosystem II (PSII) is a light-driven water:plastoquinone oxidoreductase that uses light energy to abstract electrons from H(2)O, generating O(2) and a proton gradient subsequently used for ATP formation. It consists of a core antenna complex that captures photons, and an electron transfer chain that converts photonic excitation into a charge separation. The D1/D2 (PsbA/PsbD) reaction center heterodimer binds P680, the primary electron donor of PSII as well as several subsequent electron acceptors. This Glycine max (Soybean) protein is Photosystem II protein D1.